We begin with the raw amino-acid sequence, 108 residues long: Anti-sigma-B factor antagonist (108 aa).

One can recognise an STAS domain in the interval 3–108; the sequence is LNIETITHDD…MHVNEGTEVE (106 aa). A Phosphoserine modification is found at Ser-57.

The protein belongs to the anti-sigma-factor antagonist family. Phosphorylated by RsbW on a serine residue.

Its function is as follows. Positive regulator of sigma-B activity. Non-phosphorylated RsbV binds to RsbW, preventing its association with sigma-B. When phosphorylated, releases RsbW, which is then free to complex with and inactivate sigma-B. This Staphylococcus epidermidis protein is Anti-sigma-B factor antagonist (rsbV).